A 324-amino-acid chain; its full sequence is Quinolinate synthase (324 aa).

The iminosuccinate site is built by His-44 and Ser-62. [4Fe-4S] cluster is bound at residue Cys-107. Residues 133 to 135 (YVN) and Ser-150 each bind iminosuccinate. Residue Cys-192 participates in [4Fe-4S] cluster binding. Iminosuccinate-binding positions include 218–220 (HPE) and Thr-235. Residue Cys-278 participates in [4Fe-4S] cluster binding.

The protein belongs to the quinolinate synthase family. Type 2 subfamily. [4Fe-4S] cluster serves as cofactor.

The protein resides in the cytoplasm. The enzyme catalyses iminosuccinate + dihydroxyacetone phosphate = quinolinate + phosphate + 2 H2O + H(+). Its pathway is cofactor biosynthesis; NAD(+) biosynthesis; quinolinate from iminoaspartate: step 1/1. Its function is as follows. Catalyzes the condensation of iminoaspartate with dihydroxyacetone phosphate to form quinolinate. The sequence is that of Quinolinate synthase from Leptospira interrogans serogroup Icterohaemorrhagiae serovar copenhageni (strain Fiocruz L1-130).